A 393-amino-acid polypeptide reads, in one-letter code: Elongation factor Tu (393 aa).

A tr-type G domain is found at 10 to 203 (KPHVNIGTIG…AVDDYIPEPV (194 aa)). The interval 19 to 26 (GHVDHGKT) is G1. 19–26 (GHVDHGKT) contacts GTP. Position 26 (Thr26) interacts with Mg(2+). The segment at 60 to 64 (GITIS) is G2. Residues 81–84 (DCPG) are G3. Residues 81 to 85 (DCPGH) and 136 to 139 (NKVD) each bind GTP. The segment at 136 to 139 (NKVD) is G4. The segment at 173–175 (SAL) is G5.

The protein belongs to the TRAFAC class translation factor GTPase superfamily. Classic translation factor GTPase family. EF-Tu/EF-1A subfamily. Monomer.

The protein localises to the cytoplasm. It carries out the reaction GTP + H2O = GDP + phosphate + H(+). Functionally, GTP hydrolase that promotes the GTP-dependent binding of aminoacyl-tRNA to the A-site of ribosomes during protein biosynthesis. The sequence is that of Elongation factor Tu from Chlorobium phaeobacteroides (strain BS1).